A 243-amino-acid chain; its full sequence is Undecaprenyl-phosphate mannosyltransferase (243 aa).

It belongs to the glycosyltransferase 2 family.

It carries out the reaction di-trans,octa-cis-undecaprenyl phosphate + GDP-alpha-D-mannose = D-mannosyl di-trans,octa-cis-undecaprenyl phosphate + GDP. In terms of biological role, catalyzes the transfer of mannose from GDP-mannose to D-mannosyl-1-phosphoundecaprenol. This Micrococcus luteus (strain ATCC 4698 / DSM 20030 / JCM 1464 / CCM 169 / CCUG 5858 / IAM 1056 / NBRC 3333 / NCIMB 9278 / NCTC 2665 / VKM Ac-2230) (Micrococcus lysodeikticus) protein is Undecaprenyl-phosphate mannosyltransferase.